The chain runs to 501 residues: U6 snRNA (guanine-N(2))-methyltransferase THUMPD2 (501 aa).

Residues 149-264 (TEQIQELQET…DVYSVLGIPV (116 aa)) form the THUMP domain. A disordered region spans residues 414-469 (LKGGEASSGPLNSQGGHTEEPGGEERLTPAEKAAVSEPVSSPFAASNQGRLDRMPP). A compositionally biased stretch (basic and acidic residues) spans 430 to 442 (HTEEPGGEERLTP).

It belongs to the methyltransferase superfamily. In terms of assembly, part of the heterodimeric THUMPD2-TRM112 methyltransferase complex; this complex forms an active tRNA methyltransferase, where TRMT112 acts as an activator of the catalytic subunit THUMPD2.

The protein localises to the nucleus. It carries out the reaction guanosine in U6 snRNA + S-adenosyl-L-methionine = N(2)-methylguanosine in U6 snRNA + S-adenosyl-L-homocysteine + H(+). Its function is as follows. Catalytic subunit of the THUMPD2-TRM112 methyltransferase complex, that specifically mediates the S-adenosyl-L-methionine-dependent N(2)-methylation of guanosine nucleotides, most probably at position 72 (m2G72), in the U6snRNA of the major spliceosome. This modification in the U6 snRNA affects the constitutive splicing efficiency of introns that have suboptimal splice sites and can impact final mRNA levels. This chain is U6 snRNA (guanine-N(2))-methyltransferase THUMPD2, found in Bos taurus (Bovine).